We begin with the raw amino-acid sequence, 398 residues long: Succinyl-diaminopimelate desuccinylase (398 aa).

Histidine 68 contacts Zn(2+). Aspartate 70 is a catalytic residue. A Zn(2+)-binding site is contributed by aspartate 101. Glutamate 135 serves as the catalytic Proton acceptor. Zn(2+) is bound by residues glutamate 136, glutamate 164, and histidine 349.

Belongs to the peptidase M20A family. DapE subfamily. Homodimer. The cofactor is Zn(2+). Requires Co(2+) as cofactor.

The enzyme catalyses N-succinyl-(2S,6S)-2,6-diaminopimelate + H2O = (2S,6S)-2,6-diaminopimelate + succinate. Its pathway is amino-acid biosynthesis; L-lysine biosynthesis via DAP pathway; LL-2,6-diaminopimelate from (S)-tetrahydrodipicolinate (succinylase route): step 3/3. Catalyzes the hydrolysis of N-succinyl-L,L-diaminopimelic acid (SDAP), forming succinate and LL-2,6-diaminopimelate (DAP), an intermediate involved in the bacterial biosynthesis of lysine and meso-diaminopimelic acid, an essential component of bacterial cell walls. This chain is Succinyl-diaminopimelate desuccinylase, found in Wolbachia pipientis subsp. Culex pipiens (strain wPip).